The primary structure comprises 357 residues: DNA replication and repair protein RecF (357 aa).

31–38 serves as a coordination point for ATP; that stretch reads GQNGAGKT.

Belongs to the RecF family.

It is found in the cytoplasm. The RecF protein is involved in DNA metabolism; it is required for DNA replication and normal SOS inducibility. RecF binds preferentially to single-stranded, linear DNA. It also seems to bind ATP. This is DNA replication and repair protein RecF from Coxiella burnetii (strain CbuG_Q212) (Coxiella burnetii (strain Q212)).